The sequence spans 380 residues: Tryptophan 2,3-dioxygenase (380 aa).

Substrate-binding positions include 57 to 61 and Arg-128; that span reads FIITH. His-313 is a heme binding site. Substrate is bound at residue Thr-328.

The protein belongs to the tryptophan 2,3-dioxygenase family. As to quaternary structure, homotetramer. Dimer of dimers. It depends on heme as a cofactor.

The enzyme catalyses L-tryptophan + O2 = N-formyl-L-kynurenine. The protein operates within amino-acid degradation; L-tryptophan degradation via kynurenine pathway; L-kynurenine from L-tryptophan: step 1/2. It functions in the pathway pigment biosynthesis; ommochrome biosynthesis. Its function is as follows. Heme-dependent dioxygenase that catalyzes the oxidative cleavage of the L-tryptophan (L-Trp) pyrrole ring and converts L-tryptophan to N-formyl-L-kynurenine. Catalyzes the oxidative cleavage of the indole moiety. This is Tryptophan 2,3-dioxygenase from Drosophila persimilis (Fruit fly).